Consider the following 215-residue polypeptide: Cytochrome b6 (215 aa).

Residues 32-52 form a helical membrane-spanning segment; sequence IFYCLGGITLTCFLVQVATGF. C35 lines the heme c pocket. Heme b-binding residues include H86 and H100. The next 3 membrane-spanning stretches (helical) occupy residues 90–110, 116–136, and 186–206; these read ASMMVLMMILHVFRVYLTGGF, LTWVTGVVLAVLTASFGVTGY, and LHTFVLPLLTAVFMLMHFPMI. 2 residues coordinate heme b: H187 and H202.

It belongs to the cytochrome b family. PetB subfamily. As to quaternary structure, the 4 large subunits of the cytochrome b6-f complex are cytochrome b6, subunit IV (17 kDa polypeptide, PetD), cytochrome f and the Rieske protein, while the 4 small subunits are PetG, PetL, PetM and PetN. The complex functions as a dimer. Heme b serves as cofactor. It depends on heme c as a cofactor.

Its subcellular location is the plastid. It is found in the chloroplast thylakoid membrane. Component of the cytochrome b6-f complex, which mediates electron transfer between photosystem II (PSII) and photosystem I (PSI), cyclic electron flow around PSI, and state transitions. This is Cytochrome b6 from Helianthus annuus (Common sunflower).